A 437-amino-acid polypeptide reads, in one-letter code: MSGIPHDHYEPKTGIEKWLHDRLPIVGLVYDTIMIPTPKNLNWWWIWGIVLAFTLVLQIVTGIVLAIDYTPHVDLAFASVEHIMRDVNGGWAMRYIHANGASLFFLAVYIHIFRGLYYGSYKAPREITWIVGMVIYLLMMGTAFMGYVLPWGQMSFWGATVITGLFGAIPGIGPSIQAWLLGGPAVDNATLNRFFSLHYLLPFVIAALVAIHIWAFHTTGNNNPTGVEVRRTSKADAEKDTLPFWPYFVIKDLFALALVLLGFFAVVAYMPNYLGHPDNYIQANPLSTPAHIVPEWYFLPFYAILRAFAADVWVVILVDGLTFGIVDAKFFGVIAMFGAIAVMALAPWLDTSKVRSGAYRPKFRMWFWFLVLDFVVLTWVGAMPTEYPYDWISLIASTYWFAYFLVILPLLGATEKPEPIPASIEEDFNSHYGNPAE.

A helical transmembrane segment spans residues 45 to 65 (WIWGIVLAFTLVLQIVTGIVL). His97 and His111 together coordinate heme b. A run of 9 helical transmembrane segments spans residues 100 to 120 (GASL…YYGS), 129 to 149 (WIVG…GYVL), 156 to 176 (FWGA…GPSI), 194 to 214 (FFSL…IHIW), 248 to 268 (FVIK…AVVA), 298 to 318 (FLPF…VILV), 330 to 350 (FFGV…PWLD), 365 to 385 (MWFW…AMPT), and 391 to 411 (WISL…LPLL). The heme b site is built by His198 and His212.

Belongs to the cytochrome b family. As to quaternary structure, the main subunits of complex b-c1 are: cytochrome b, cytochrome c1 and the Rieske protein. The cofactor is heme b.

Its subcellular location is the cell membrane. Its function is as follows. Component of the ubiquinol-cytochrome c reductase complex (complex III or cytochrome b-c1 complex), which is a respiratory chain that generates an electrochemical potential coupled to ATP synthesis. This Rhodobacter capsulatus (Rhodopseudomonas capsulata) protein is Cytochrome b (petB).